Here is a 41-residue protein sequence, read N- to C-terminus: Photosystem II reaction center protein L (41 aa).

The helical transmembrane segment at 20–40 (SLYLGLLLVFVVGLLFSSYFL) threads the bilayer.

It belongs to the PsbL family. PSII is composed of 1 copy each of membrane proteins PsbA, PsbB, PsbC, PsbD, PsbE, PsbF, PsbH, PsbI, PsbJ, PsbK, PsbL, PsbM, PsbT, PsbX, PsbY, PsbZ, Psb30/Ycf12, peripheral proteins PsbO, CyanoQ (PsbQ), PsbU, PsbV and a large number of cofactors. It forms dimeric complexes.

It localises to the cellular thylakoid membrane. Functionally, one of the components of the core complex of photosystem II (PSII). PSII is a light-driven water:plastoquinone oxidoreductase that uses light energy to abstract electrons from H(2)O, generating O(2) and a proton gradient subsequently used for ATP formation. It consists of a core antenna complex that captures photons, and an electron transfer chain that converts photonic excitation into a charge separation. This subunit is found at the monomer-monomer interface and is required for correct PSII assembly and/or dimerization. The chain is Photosystem II reaction center protein L from Synechococcus sp. (strain JA-2-3B'a(2-13)) (Cyanobacteria bacterium Yellowstone B-Prime).